The sequence spans 482 residues: Tektin (482 aa).

5 coiled-coil regions span residues 100-129 (CLAEVISEIAELLSTKKRLEERNGKVQAKI), 171-204 (ARAVAQVDREVAQLEAVRAKLEADLRDKTEALRV), 282-324 (RLNE…ALTS), 376-407 (VKVAAVDREIAALDATAAQLESNIADKDDALR), and 441-478 (RTQTLARIRELEASLTSARREREAMESSIRQLRDTMGG). Residues 311-330 (EQARAKGQRSALTSALDDKR) are disordered. Arg462 is modified (asymmetric dimethylarginine).

This sequence belongs to the tektin family. In terms of processing, asymmetrically dimethylated at Arg-462 during flagellum resorption. Probably methylated by PRMT1.

It localises to the cytoplasm. The protein resides in the cytoskeleton. It is found in the flagellum axoneme. Its subcellular location is the flagellum basal body. Functionally, structural component of ciliary and flagellar microtubules. Plays a key role in the assembly or attachment of the inner dynein arm to microtubules in flagella and cilia. Forms filamentous polymers in the walls of ciliary and flagellar microtubules. The sequence is that of Tektin from Chlamydomonas reinhardtii (Chlamydomonas smithii).